The following is a 198-amino-acid chain: Ribonuclease HII (198 aa).

In terms of domain architecture, RNase H type-2 spans 3–194 (RRVCGVDEAG…VKRCLALGQQ (192 aa)). Residues Asp9, Glu10, and Asp101 each coordinate a divalent metal cation.

The protein belongs to the RNase HII family. Mn(2+) is required as a cofactor. The cofactor is Mg(2+).

It is found in the cytoplasm. It catalyses the reaction Endonucleolytic cleavage to 5'-phosphomonoester.. Endonuclease that specifically degrades the RNA of RNA-DNA hybrids. The chain is Ribonuclease HII from Laribacter hongkongensis (strain HLHK9).